We begin with the raw amino-acid sequence, 111 residues long: Large ribosomal subunit protein uL24 (111 aa).

This sequence belongs to the universal ribosomal protein uL24 family. In terms of assembly, part of the 50S ribosomal subunit.

Its function is as follows. One of two assembly initiator proteins, it binds directly to the 5'-end of the 23S rRNA, where it nucleates assembly of the 50S subunit. One of the proteins that surrounds the polypeptide exit tunnel on the outside of the subunit. The sequence is that of Large ribosomal subunit protein uL24 from Streptococcus pneumoniae (strain Hungary19A-6).